The primary structure comprises 331 residues: Ketol-acid reductoisomerase (NADP(+)) (331 aa).

The region spanning 2–182 (ARMYYDEDGN…GGTRAGILET (181 aa)) is the KARI N-terminal Rossmann domain. Residues 25–28 (YGSQ), S51, S53, and 83–86 (DEVQ) each bind NADP(+). The active site involves H108. NADP(+) is bound at residue G134. Positions 183 to 328 (SFREETETDL…KDLRAMFSWL (146 aa)) constitute a KARI C-terminal knotted domain. D191, E195, E227, and E231 together coordinate Mg(2+). A substrate-binding site is contributed by S252.

This sequence belongs to the ketol-acid reductoisomerase family. Requires Mg(2+) as cofactor.

It catalyses the reaction (2R)-2,3-dihydroxy-3-methylbutanoate + NADP(+) = (2S)-2-acetolactate + NADPH + H(+). The catalysed reaction is (2R,3R)-2,3-dihydroxy-3-methylpentanoate + NADP(+) = (S)-2-ethyl-2-hydroxy-3-oxobutanoate + NADPH + H(+). Its pathway is amino-acid biosynthesis; L-isoleucine biosynthesis; L-isoleucine from 2-oxobutanoate: step 2/4. It functions in the pathway amino-acid biosynthesis; L-valine biosynthesis; L-valine from pyruvate: step 2/4. In terms of biological role, involved in the biosynthesis of branched-chain amino acids (BCAA). Catalyzes an alkyl-migration followed by a ketol-acid reduction of (S)-2-acetolactate (S2AL) to yield (R)-2,3-dihydroxy-isovalerate. In the isomerase reaction, S2AL is rearranged via a Mg-dependent methyl migration to produce 3-hydroxy-3-methyl-2-ketobutyrate (HMKB). In the reductase reaction, this 2-ketoacid undergoes a metal-dependent reduction by NADPH to yield (R)-2,3-dihydroxy-isovalerate. The polypeptide is Ketol-acid reductoisomerase (NADP(+)) (Gloeothece citriformis (strain PCC 7424) (Cyanothece sp. (strain PCC 7424))).